The chain runs to 309 residues: DSC E3 ubiquitin ligase complex subunit C (309 aa).

N-linked (GlcNAc...) asparagine glycosylation occurs at Asn-61. Disordered regions lie at residues 88-110 (LPPS…GKGK) and 148-177 (EQAD…FDRL). The next 2 membrane-spanning stretches (helical) occupy residues 257–277 (DDML…AMWL) and 289–309 (GLAV…RIMN).

It belongs to the dsc3 family. As to quaternary structure, component of the DSC E3 ubiquitin ligase complex composed of dscA, dscB, dscC and dscD.

It localises to the endoplasmic reticulum membrane. The protein operates within protein modification; protein ubiquitination. In terms of biological role, component of the DSC E3 ubiquitin ligase complex which is required for the srbA transcriptional activator proteolytic cleavage to release the soluble transcription factor from the membrane in low oxygen or sterol conditions. Required for growth during hypoxia and triazole drug susceptibility, as well as for virulence in a murine model of invasive pulmonary aspergillosis (IPA). The polypeptide is DSC E3 ubiquitin ligase complex subunit C (Aspergillus fumigatus (strain ATCC MYA-4609 / CBS 101355 / FGSC A1100 / Af293) (Neosartorya fumigata)).